The sequence spans 238 residues: MLMDVFSSFDAHSYNLIWLSMPLWLLSSMVPMTVLFSDVHSKSGSTSSFRSLVLSFTYSMIRLNGKGLKLSGFPLVMSGLFMMILMLNLSGNFPFFFPVSGQFVFGFSFALSIWTCLVLSSLLCSFEQGLMSLVPTGCPLILVPFMVVVELISGMLRPLTLVLRLTLNLGAGKVILTMCSSELVVGWLNSSSLITGVGGIKGLLMGGGVFGAAEVAIACIQCYIFCVLLCLYTEDHSS.

Helical transmembrane passes span 16–36, 79–99, 103–123, 129–149, and 209–229; these read LIWLSMPLWLLSSMVPMTVLF, GLFMMILMLNLSGNFPFFFPV, FVFGFSFALSIWTCLVLSSLL, GLMSLVPTGCPLILVPFMVVV, and VFGAAEVAIACIQCYIFCVLL.

Belongs to the ATPase A chain family. In terms of assembly, F-type ATPases have 2 components, CF(1) - the catalytic core - and CF(0) - the membrane proton channel. CF(1) has five subunits: alpha(3), beta(3), gamma(1), delta(1), epsilon(1). CF(0) has three main subunits: a, b and c.

It is found in the mitochondrion inner membrane. Its function is as follows. Mitochondrial membrane ATP synthase (F(1)F(0) ATP synthase or Complex V) produces ATP from ADP in the presence of a proton gradient across the membrane which is generated by electron transport complexes of the respiratory chain. F-type ATPases consist of two structural domains, F(1) - containing the extramembraneous catalytic core and F(0) - containing the membrane proton channel, linked together by a central stalk and a peripheral stalk. During catalysis, ATP synthesis in the catalytic domain of F(1) is coupled via a rotary mechanism of the central stalk subunits to proton translocation. Key component of the proton channel; it may play a direct role in the translocation of protons across the membrane. The sequence is that of ATP synthase subunit a (ATP6) from Mytilus edulis (Blue mussel).